A 354-amino-acid polypeptide reads, in one-letter code: UDP-N-acetylglucosamine--N-acetylmuramyl-(pentapeptide) pyrophosphoryl-undecaprenol N-acetylglucosamine transferase (354 aa).

UDP-N-acetyl-alpha-D-glucosamine-binding positions include Thr11–Gly13, Arg164, Ser194, and Gln289.

The protein belongs to the glycosyltransferase 28 family. MurG subfamily.

The protein localises to the cell membrane. The enzyme catalyses di-trans,octa-cis-undecaprenyl diphospho-N-acetyl-alpha-D-muramoyl-L-alanyl-D-glutamyl-meso-2,6-diaminopimeloyl-D-alanyl-D-alanine + UDP-N-acetyl-alpha-D-glucosamine = di-trans,octa-cis-undecaprenyl diphospho-[N-acetyl-alpha-D-glucosaminyl-(1-&gt;4)]-N-acetyl-alpha-D-muramoyl-L-alanyl-D-glutamyl-meso-2,6-diaminopimeloyl-D-alanyl-D-alanine + UDP + H(+). Its pathway is cell wall biogenesis; peptidoglycan biosynthesis. In terms of biological role, cell wall formation. Catalyzes the transfer of a GlcNAc subunit on undecaprenyl-pyrophosphoryl-MurNAc-pentapeptide (lipid intermediate I) to form undecaprenyl-pyrophosphoryl-MurNAc-(pentapeptide)GlcNAc (lipid intermediate II). This chain is UDP-N-acetylglucosamine--N-acetylmuramyl-(pentapeptide) pyrophosphoryl-undecaprenol N-acetylglucosamine transferase, found in Clostridium botulinum (strain ATCC 19397 / Type A).